The sequence spans 106 residues: UPF0145 protein VC_A0951 (106 aa).

It belongs to the UPF0145 family.

This is UPF0145 protein VC_A0951 from Vibrio cholerae serotype O1 (strain ATCC 39315 / El Tor Inaba N16961).